Consider the following 379-residue polypeptide: Elongation factor Ts, mitochondrial (379 aa).

The transit peptide at 1-33 (MAWGQGAKRSILGLLFRSQHQTARAYSSSAFQT) directs the protein to the mitochondrion.

The protein belongs to the EF-Ts family.

It localises to the mitochondrion. Its function is as follows. Associates with the EF-Tu.GDP complex and induces the exchange of GDP to GTP. It remains bound to the aminoacyl-tRNA.EF-Tu.GTP complex up to the GTP hydrolysis stage on the ribosome. This chain is Elongation factor Ts, mitochondrial, found in Zea mays (Maize).